We begin with the raw amino-acid sequence, 218 residues long: MARRKVRPRLIAELARRVRALREQRERPRDSVRYALDYETLIRPHSGRKLPLRAWVDVRRESRLLQLLGRLPFFGLGRLVTRKSWLWQHDEPCYWRLTRVRPDYTAQNLDHGKAWGILTFKGKTESEAREIEQVMHHDWRLVPKHEEAAFTSFTPAPEETPRPVPYPPLLRAMILAERQKNGDPSTEEPMLSLERIRTDPWDYPENQEAKKKTKGTAV.

The segment at 178 to 218 (RQKNGDPSTEEPMLSLERIRTDPWDYPENQEAKKKTKGTAV) is disordered.

It belongs to the mitochondrion-specific ribosomal protein mS34 family. Component of the mitochondrial ribosome small subunit (28S) which comprises a 12S rRNA and about 30 distinct proteins.

It is found in the mitochondrion. Its function is as follows. Required for mitochondrial translation, plays a role in maintaining the stability of the small ribosomal subunit and the 12S rRNA that are required for mitoribosome formation. The polypeptide is Small ribosomal subunit protein mS34 (Bos taurus (Bovine)).